A 611-amino-acid polypeptide reads, in one-letter code: tRNA uridine 5-carboxymethylaminomethyl modification enzyme MnmG (611 aa).

12–17 provides a ligand contact to FAD; sequence GGGHSG. 271–285 serves as a coordination point for NAD(+); that stretch reads GPRYCPSIEEKVYRF.

It belongs to the MnmG family. Homodimer. Heterotetramer of two MnmE and two MnmG subunits. It depends on FAD as a cofactor.

Its subcellular location is the cytoplasm. Functionally, NAD-binding protein involved in the addition of a carboxymethylaminomethyl (cmnm) group at the wobble position (U34) of certain tRNAs, forming tRNA-cmnm(5)s(2)U34. This is tRNA uridine 5-carboxymethylaminomethyl modification enzyme MnmG from Karelsulcia muelleri (strain GWSS) (Sulcia muelleri).